The sequence spans 917 residues: Transcriptional regulatory protein SEF1 (917 aa).

The segment at 1–88 is disordered; sequence MKFEKGKVRI…SKPTGHRPVT (88 aa). Residues 13-27 are compositionally biased toward pro residues; it reads KPSPTPTNPQTPLPL. The span at 56–70 shows a compositional bias: low complexity; that stretch reads SNSTASTPNSATPTS. Residues 71 to 81 are compositionally biased toward polar residues; sequence VGTPPQKTSKP. A DNA-binding region (zn(2)-C6 fungal-type) is located at residues 90–120; it reads CTFCRQHKIKCNASDNYPNPCERCKKMGLKC. The stretch at 129–164 forms a coiled coil; that stretch reads RKGSQIQSLKSDVDELKAKIEMLTKNESLLTQALNQ. 2 disordered regions span residues 168–212 and 778–849; these read NHAS…ASPI and QQYP…PFIL. The segment covering 171 to 184 has biased composition (low complexity); that stretch reads SQQQQSSGSQSQQQ. The span at 191–212 shows a compositional bias: polar residues; sequence RALSYTSANSSPQVAFSNASPI. Over residues 778–827 the composition is skewed to low complexity; that stretch reads QQYPMQQDQQQQEPSQQQQQKHSQQSQQYQQQQQSNQQQPHLQHQRQFQQ.

As to quaternary structure, interacts with SSN3 and SFU1. Post-translationally, phosphorylated by SSN3 under iron-depleted conditions which leads to nuclear localization.

The protein resides in the cytoplasm. It localises to the nucleus. Its function is as follows. Transcription factor which plays an essential role in virulence by activating the transcription of iron uptake genes such as FRE7 in iron-poor environments such as the host bloodstream and internal organs. Promotes commensalism in a mouse model of gastrointestinal infection. This chain is Transcriptional regulatory protein SEF1 (SEF1), found in Candida albicans (strain SC5314 / ATCC MYA-2876) (Yeast).